The following is a 177-amino-acid chain: Putative pre-16S rRNA nuclease (177 aa).

It belongs to the YqgF nuclease family.

The protein resides in the cytoplasm. Could be a nuclease involved in processing of the 5'-end of pre-16S rRNA. In Psychrobacter sp. (strain PRwf-1), this protein is Putative pre-16S rRNA nuclease.